Here is a 634-residue protein sequence, read N- to C-terminus: MAEEQDFAQLCRLPTQPSHSHCVNNTYRSTQHSQALLRGLLALRDSGILFDVVLVVEGKHIEAHRILLAASCDYFRGMFAGGLKEMEQEEVLIHGVSYNAMCQILHFIYTSELELSLSNVQETLVAACQLQIPEIIHFCCDFLMSWVDEENILDVYRLADLFDLNHLTQQLDTYILKNFVAFSRTDKYRQLPLEKVYSLLSSNRLEVSCETEVYEGALLYHYSLEQVQADQISLNEPPKLLETVRFPLMEAEVLQRLHDKLGPSPLRDTVASALMYHRNEILQPSLQGPQTELRSDFQCVVGFGGIHSTPSTILSDQAKYLNPLLGEWKHFTASLAPRMSNQGIAVLNNFVYLIGGDNNVQGFRAESRCWRYDPRHNRWFQIQSLQQEHADLCVCVVGKYIYAVAGRDYHNDLSAVERYDPATNSWDYVAPLKKEVYAHAGTTLQGKMYITCGRRGEDYLKETHCYDPGSNTWHTLADGPVRRAWHGMAALLDKLFVIGGSNNDAGYRRDVHQVACYSCTSRQWSSVCPLPAGHGEPGIAVLDSRIYVLGGRSHNRGSRTGYVHIYDMEKDCWEEGPQLNNSISGLAACVLTLPRSLLHEQPRGTPNRSQADADFASEVMSVSDWEEFDNSSED.

Position 2 is an N-acetylalanine (Ala2). Positions 50–117 constitute a BTB domain; the sequence is FDVVLVVEGK…IYTSELELSL (68 aa). Kelch repeat units follow at residues 299-349, 350-399, 400-446, 448-493, 495-544, and 545-593; these read CVVG…VLNN, FVYL…VVGK, YIYA…TLQG, MYIT…ALLD, LFVI…VLDS, and RIYV…VLTL. Residue Thr463 is modified to Phosphothreonine. Tyr466 carries the phosphotyrosine modification. The residue at position 475 (Thr475) is a Phosphothreonine. Residues 600–634 form a disordered region; the sequence is EQPRGTPNRSQADADFASEVMSVSDWEEFDNSSED. Thr605 bears the Phosphothreonine mark. The span at 624 to 634 shows a compositional bias: acidic residues; that stretch reads DWEEFDNSSED.

In terms of assembly, component of the BCR(KLHL22) E3 ubiquitin ligase complex, at least composed of CUL3, KLHL22 and RBX1. Interacts with PLK1. Interacts with DEPDC5 (via DEP domain); the interaction depends on amino acid availability. Interacts with YWHAE; required for the nuclear localization of KLHL22 upon amino acid starvation.

It is found in the cytoplasm. The protein resides in the cytosol. The protein localises to the cytoskeleton. Its subcellular location is the microtubule organizing center. It localises to the centrosome. It is found in the spindle. The protein resides in the nucleus. The protein localises to the lysosome. It functions in the pathway protein modification; protein ubiquitination. Substrate-specific adapter of a BCR (BTB-CUL3-RBX1) E3 ubiquitin ligase complex required for chromosome alignment and localization of PLK1 at kinetochores. The BCR(KLHL22) ubiquitin ligase complex mediates monoubiquitination of PLK1, leading to PLK1 dissociation from phosphoreceptor proteins and subsequent removal from kinetochores, allowing silencing of the spindle assembly checkpoint (SAC) and chromosome segregation. Monoubiquitination of PLK1 does not lead to PLK1 degradation. The BCR(KLHL22) ubiquitin ligase complex is also responsible for the amino acid-stimulated 'Lys-48' polyubiquitination and proteasomal degradation of DEPDC5. Through the degradation of DEPDC5, releases the GATOR1 complex-mediated inhibition of the TORC1 pathway. It is therefore an amino acid-dependent activator within the amino acid-sensing branch of the TORC1 pathway, indirectly regulating different cellular processes including cell growth and autophagy. The sequence is that of Kelch-like protein 22 from Mus musculus (Mouse).